Reading from the N-terminus, the 461-residue chain is Tip elongation protein 1 (461 aa).

Residues 22–69 form the CAP-Gly domain; the sequence is GEVENRKGVYVGLELLPEFAEFGKNRGVVDGREYFKTKNNEKTGIFVP. 5 positions are modified to phosphoserine: Ser-82, Ser-84, Ser-289, Ser-294, and Ser-305. A coiled-coil region spans residues 134–418; that stretch reads TEKILQKRIE…RMSPAEFELE (285 aa). A compositionally biased stretch (polar residues) spans 278-303; it reads KANSSTANEKLSHMESSSPTLTNASF. The segment at 278–323 is disordered; it reads KANSSTANEKLSHMESSSPTLTNASFESPKRGKGSNDLPENHPQRR. Position 367 is a phosphothreonine (Thr-367). Residues 417–437 form a disordered region; the sequence is LETTQEVEENDSDSHDDEETW.

Monomer. Interacts with tea1 and tea2. Interacts with tea4 in the presence of tea1.

The protein resides in the cytoplasm. Its subcellular location is the cytoskeleton. Has a role in stabilizing and targeting the growing tips of the microtubules along the long axis of the cell, directing them to the ends of the cell. Acts as a cargo for tea2. The sequence is that of Tip elongation protein 1 (tip1) from Schizosaccharomyces pombe (strain 972 / ATCC 24843) (Fission yeast).